The following is a 312-amino-acid chain: tRNA dimethylallyltransferase (312 aa).

11 to 18 contacts ATP; the sequence is GATATGKT. A substrate-binding site is contributed by 13–18; that stretch reads TATGKT. Residues 36-39 form an interaction with substrate tRNA region; sequence DSRQ.

This sequence belongs to the IPP transferase family. Monomer. The cofactor is Mg(2+).

It catalyses the reaction adenosine(37) in tRNA + dimethylallyl diphosphate = N(6)-dimethylallyladenosine(37) in tRNA + diphosphate. In terms of biological role, catalyzes the transfer of a dimethylallyl group onto the adenine at position 37 in tRNAs that read codons beginning with uridine, leading to the formation of N6-(dimethylallyl)adenosine (i(6)A). This Thermosynechococcus vestitus (strain NIES-2133 / IAM M-273 / BP-1) protein is tRNA dimethylallyltransferase.